A 171-amino-acid polypeptide reads, in one-letter code: Large ribosomal subunit protein uL10 (171 aa).

This sequence belongs to the universal ribosomal protein uL10 family. In terms of assembly, part of the ribosomal stalk of the 50S ribosomal subunit. The N-terminus interacts with L11 and the large rRNA to form the base of the stalk. The C-terminus forms an elongated spine to which L12 dimers bind in a sequential fashion forming a multimeric L10(L12)X complex.

Functionally, forms part of the ribosomal stalk, playing a central role in the interaction of the ribosome with GTP-bound translation factors. This is Large ribosomal subunit protein uL10 from Corynebacterium efficiens (strain DSM 44549 / YS-314 / AJ 12310 / JCM 11189 / NBRC 100395).